A 1337-amino-acid polypeptide reads, in one-letter code: Rho GTPase-activating protein 29 (1337 aa).

Over residues 1–13 (MFRQGSNSGNKRM) the composition is skewed to polar residues. Disordered stretches follow at residues 1–20 (MFRQ…ARLS), 369–397 (REEY…LEKK), 513–551 (SSKT…ADEV), and 564–654 (ERRS…TGLS). Residues 225–488 (EQVDLLLLKN…QAKKYEPGQR (264 aa)) enclose the F-BAR domain. Residues 326-443 (LLARKNDLDK…SEILAQIRKL (118 aa)) are a coiled coil. Residues 369 to 384 (REEYEKARSSTSRTEE) are compositionally biased toward basic and acidic residues. Composition is skewed to polar residues over residues 525–545 (QNST…SMDN) and 568–579 (NSSIDMQVPRTQ). The span at 596–613 (CSDSESAGGSSESRSMDS) shows a compositional bias: low complexity. The Phorbol-ester/DAG-type zinc-finger motif lies at 676 to 723 (AHTHKLRKLRAPSKCRECDSLVVFHGAECEECSLACHKKCLETLAIQC). In terms of domain architecture, Rho-GAP spans 737–950 (IDFAQVVKNS…LLIKHHQMIF (214 aa)). Positions 960-973 (TSPTVSQASFGSSI) are enriched in polar residues. 5 disordered regions span residues 960–983 (TSPT…LSRH), 1016–1066 (MKTG…AKPV), 1083–1114 (SRNT…TNFY), 1149–1210 (PPSG…KPSD), and 1273–1337 (TVSR…AHFV). Positions 974 to 983 (QDKESKLSRH) are enriched in basic and acidic residues. Over residues 1083–1092 (SRNTVEHDHS) the composition is skewed to basic and acidic residues. 2 stretches are compositionally biased toward polar residues: residues 1161 to 1177 (MASQ…SQSG) and 1295 to 1310 (VTLS…TEEL). Basic and acidic residues predominate over residues 1325-1337 (RMQELEHREAHFV).

In terms of biological role, GTPase activator for the Rho-type GTPases by converting them to an inactive GDP-bound state. Has strong activity toward RHOA, and weaker activity toward RAC1 and CDC42. This chain is Rho GTPase-activating protein 29 (arhgap29), found in Danio rerio (Zebrafish).